The sequence spans 329 residues: Succinylglutamate desuccinylase (329 aa).

Zn(2+) contacts are provided by histidine 53, glutamate 56, and histidine 148. The active site involves glutamate 211.

This sequence belongs to the AspA/AstE family. Succinylglutamate desuccinylase subfamily. Requires Zn(2+) as cofactor.

It catalyses the reaction N-succinyl-L-glutamate + H2O = L-glutamate + succinate. Its pathway is amino-acid degradation; L-arginine degradation via AST pathway; L-glutamate and succinate from L-arginine: step 5/5. In terms of biological role, transforms N(2)-succinylglutamate into succinate and glutamate. The chain is Succinylglutamate desuccinylase from Erwinia tasmaniensis (strain DSM 17950 / CFBP 7177 / CIP 109463 / NCPPB 4357 / Et1/99).